The sequence spans 213 residues: Translation initiation factor IF-3 (213 aa).

Positions valine 178 to serine 213 are disordered. The span at isoleucine 182 to lysine 201 shows a compositional bias: basic and acidic residues.

It belongs to the IF-3 family. Monomer.

It is found in the cytoplasm. In terms of biological role, IF-3 binds to the 30S ribosomal subunit and shifts the equilibrium between 70S ribosomes and their 50S and 30S subunits in favor of the free subunits, thus enhancing the availability of 30S subunits on which protein synthesis initiation begins. The protein is Translation initiation factor IF-3 of Solibacter usitatus (strain Ellin6076).